Here is a 699-residue protein sequence, read N- to C-terminus: Cysteine--tRNA ligase (699 aa).

Residues 1-226 (MTTITEKRLT…SEQQRLIHNP (226 aa)) are unknown. Cys254 provides a ligand contact to Zn(2+). The 'HIGH' region motif lies at 256–266 (MTVYDYCHLGH). Zn(2+)-binding residues include Cys435, His460, and Glu464. Positions 508–512 (KMSKS) match the 'KMSKS' region motif. Lys511 is a binding site for ATP.

Belongs to the class-I aminoacyl-tRNA synthetase family. As to quaternary structure, monomer. The cofactor is Zn(2+).

It localises to the cytoplasm. The catalysed reaction is tRNA(Cys) + L-cysteine + ATP = L-cysteinyl-tRNA(Cys) + AMP + diphosphate. The chain is Cysteine--tRNA ligase (cysS) from Neisseria meningitidis serogroup A / serotype 4A (strain DSM 15465 / Z2491).